We begin with the raw amino-acid sequence, 377 residues long: DNA-directed RNA polymerase subunit alpha (377 aa).

The segment at 1–259 is alpha N-terminal domain (alpha-NTD); sequence MSDSSHNLLY…KHFSVFEKMD (259 aa). The tract at residues 276 to 377 is alpha C-terminal domain (alpha-CTD); sequence KDDILHKLVL…KIRLSKNTKG (102 aa).

The protein belongs to the RNA polymerase alpha chain family. As to quaternary structure, homodimer. The RNAP catalytic core consists of 2 alpha, 1 beta, 1 beta' and 1 omega subunit. When a sigma factor is associated with the core the holoenzyme is formed, which can initiate transcription.

It carries out the reaction RNA(n) + a ribonucleoside 5'-triphosphate = RNA(n+1) + diphosphate. In terms of biological role, DNA-dependent RNA polymerase catalyzes the transcription of DNA into RNA using the four ribonucleoside triphosphates as substrates. The polypeptide is DNA-directed RNA polymerase subunit alpha (Chlamydia trachomatis serovar A (strain ATCC VR-571B / DSM 19440 / HAR-13)).